We begin with the raw amino-acid sequence, 1084 residues long: TNF receptor-associated factor family protein DDB_G0272098 (1084 aa).

Residues 19 to 103 (YYCPDCGELL…KNRYYETKNF (85 aa)) form the LIM zinc-binding domain. TRAF-type zinc fingers lie at residues 122–190 (KHIK…IDHE) and 191–248 (IHLS…YNMS). Positions 265–321 (IEEQNQDIKELHNFIENHLSKKFIDLDTIVNIQKYLIKNKNQKISQLTEIIKRVDNS) form a coiled coil. 4 disordered regions span residues 348-392 (YKNS…NINE), 490-523 (IRQQ…NTTI), 537-656 (NNNI…KDGL), and 709-897 (SIVE…NDDD). 4 stretches are compositionally biased toward low complexity: residues 349 to 375 (KNSN…TNEN), 492 to 509 (QQQQ…QQQQ), 537 to 549 (NNNI…NNNK), and 556 to 570 (ITAA…TTST). Residues 489–553 (LIRQQQQQQQ…NNNNNKNNDD (65 aa)) adopt a coiled-coil conformation. The span at 571–586 (HTILNGTNNEASMTDI) shows a compositional bias: polar residues. Positions 587-637 (NETTSTTTTAETTEATASESTEESNNTAETTTTTTTTTTTITTAAETVNST) are enriched in low complexity. A compositionally biased stretch (basic and acidic residues) spans 644–656 (TSEKVEEKGKDGL). The stretch at 735-852 (NGNENENENE…NNNNNNNENV (118 aa)) forms a coiled coil. Residues 739 to 757 (NENENENENENENENENEN) are compositionally biased toward acidic residues. The span at 774–785 (SNINTSNDTEPT) shows a compositional bias: polar residues. Over residues 790–799 (EDIKKNKENE) the composition is skewed to basic and acidic residues. Residues 809–849 (NNNIKSVEDTNNNNNNNNNNNNNNNNNNNNNNNNNNNNNNN) show a composition bias toward low complexity. Composition is skewed to basic and acidic residues over residues 853 to 864 (YDIKKDRNRENV) and 875 to 892 (ENGK…SEDK). The region spanning 909–1042 (IFRNQILFKD…DNCFIVNLEV (134 aa)) is the MATH domain. The disordered stretch occupies residues 1056-1084 (LLQKSSPPAATTTTTTSSSSSKTTPKTKR). A compositionally biased stretch (low complexity) spans 1059–1084 (KSSPPAATTTTTTSSSSSKTTPKTKR).

The protein belongs to the TNF receptor-associated factor family.

The protein resides in the cytoplasm. Probable adapter protein and signal transducer that links members of the tumor necrosis factor receptor family to different signaling pathways by association with the receptor cytoplasmic domain and kinases. This Dictyostelium discoideum (Social amoeba) protein is TNF receptor-associated factor family protein DDB_G0272098.